A 406-amino-acid polypeptide reads, in one-letter code: MSLIRVNGEAFKLSLESLEEDPFETKETLETLVKQTSVVLLAAGESRRFSQIIKKQWLRSNHTPLWLSVYESFKEALDFKEILLIVSELDYIYIQRHYPEIKLVKGGASRQESVRNALKIIDSTYTLTSDVARGLANMEALKSLFLTLQQTSHYCIAPYLPCYDTAIYYNEALDREAIKLIQTPQLSHTKALQSALNQGDFKDESSAILQAFPNRVSYIEGSKNLHKLTTSGDLKHFALFFNPAKDTFIGMGFDTHAFIKDKPMVLGGVVLDCEFGLKAHSDGDALLHAVIDAILGAIKGGDIGEWFPDNDPKYKNASSKELLKIVLDFSQSIGFELFEMGATIFSEIPKITPYKPAILENLSQLLGLEKSQISLKATTMEKMGFIGKQEGLLVQAHVSMRYKQKL.

Positions 1 to 247 (MSLIRVNGEA…ALFFNPAKDT (247 aa)) are 2-C-methyl-D-erythritol 4-phosphate cytidylyltransferase. The segment at 248–406 (FIGMGFDTHA…HVSMRYKQKL (159 aa)) is 2-C-methyl-D-erythritol 2,4-cyclodiphosphate synthase. A divalent metal cation contacts are provided by aspartate 254 and histidine 256. Residues 254-256 (DTH) and 280-281 (HS) contribute to the 4-CDP-2-C-methyl-D-erythritol 2-phosphate site. Histidine 288 is a binding site for a divalent metal cation. 4-CDP-2-C-methyl-D-erythritol 2-phosphate-binding positions include 302–304 (DIG), 307–311 (FPDND), 378–381 (TTME), phenylalanine 385, and lysine 388.

This sequence in the N-terminal section; belongs to the IspD/TarI cytidylyltransferase family. IspD subfamily. It in the C-terminal section; belongs to the IspF family. Requires a divalent metal cation as cofactor.

It catalyses the reaction 2-C-methyl-D-erythritol 4-phosphate + CTP + H(+) = 4-CDP-2-C-methyl-D-erythritol + diphosphate. The catalysed reaction is 4-CDP-2-C-methyl-D-erythritol 2-phosphate = 2-C-methyl-D-erythritol 2,4-cyclic diphosphate + CMP. It participates in isoprenoid biosynthesis; isopentenyl diphosphate biosynthesis via DXP pathway; isopentenyl diphosphate from 1-deoxy-D-xylulose 5-phosphate: step 2/6. The protein operates within isoprenoid biosynthesis; isopentenyl diphosphate biosynthesis via DXP pathway; isopentenyl diphosphate from 1-deoxy-D-xylulose 5-phosphate: step 4/6. Bifunctional enzyme that catalyzes the formation of 4-diphosphocytidyl-2-C-methyl-D-erythritol from CTP and 2-C-methyl-D-erythritol 4-phosphate (MEP) (IspD), and catalyzes the conversion of 4-diphosphocytidyl-2-C-methyl-D-erythritol 2-phosphate (CDP-ME2P) to 2-C-methyl-D-erythritol 2,4-cyclodiphosphate (ME-CPP) with a corresponding release of cytidine 5-monophosphate (CMP) (IspF). This Helicobacter pylori (strain P12) protein is Bifunctional enzyme IspD/IspF.